A 1502-amino-acid chain; its full sequence is Ras guanine nucleotide exchange factor P (1502 aa).

Residues 84–187 (FIIDNQVLDW…LLYSLMKFSE (104 aa)) form the Calponin-homology (CH) domain. Disordered regions lie at residues 216-242 (AQSS…SSNE), 325-436 (QQQQ…PNNN), 456-534 (EDNT…VGRG), and 589-935 (TTTA…NQNN). Low complexity-rich tracts occupy residues 218–242 (SSSS…SSNE), 325–345 (QQQQ…TTTT), 371–400 (TTSS…LLNH), and 407–421 (SSST…PIST). The stretch at 287 to 328 (QQQQQQQQQQQQQQQQQQQQQQQQQQQQQQQQQQQQQQQQQQ) forms a coiled coil. Over residues 422-436 (PSTSKSNSFQKPNNN) the composition is skewed to polar residues. The stretch at 451–515 (EENEIEDNTN…NQNENEDEVK (65 aa)) forms a coiled coil. Positions 458–508 (NTNNNNNNNNNNNNNNNNNNNNNNNNNNNNNNNNTNDNINNNNKNNNNNQN) are enriched in low complexity. Pro residues predominate over residues 518-528 (HSPPKVRPPLP). 5 stretches are compositionally biased toward low complexity: residues 589–646 (TTTA…NNNN), 663–675 (TIST…TGTI), 686–719 (SQPL…LSLP), 764–790 (NSIN…VSQS), and 813–853 (NSNS…NNNN). The segment covering 861 to 876 (LTMSNQSANSLKSSGN) has biased composition (polar residues). The span at 883-935 (TNGNNNISQNQNQNQNQNQNQTQNQNQNQNQNHISHSNSISSGNLNNHVNQNN) shows a compositional bias: low complexity. A coiled-coil region spans residues 1032-1076 (VEENKNLITRTEEMQKMIDSLMKEKKELINEKNTLASMLAKTKQQ). The N-terminal Ras-GEF domain occupies 1102–1249 (GKYEIKGGTT…SELKLVFSTP (148 aa)). One can recognise a Ras-GEF domain in the interval 1267 to 1498 (DPAEIARQLT…FNLSLICEPR (232 aa)).

Its function is as follows. Promotes the exchange of Ras-bound GDP by GTP. In Dictyostelium discoideum (Social amoeba), this protein is Ras guanine nucleotide exchange factor P (gefP).